The following is a 338-amino-acid chain: Fructose-1,6-bisphosphatase class 1 (338 aa).

Mg(2+) contacts are provided by glutamate 91, aspartate 113, leucine 115, and aspartate 116. Substrate contacts are provided by residues 116-119 (DGSS), asparagine 211, tyrosine 244, and lysine 277. Glutamate 283 serves as a coordination point for Mg(2+).

It belongs to the FBPase class 1 family. Homotetramer. Mg(2+) is required as a cofactor.

The protein localises to the cytoplasm. It catalyses the reaction beta-D-fructose 1,6-bisphosphate + H2O = beta-D-fructose 6-phosphate + phosphate. It functions in the pathway carbohydrate biosynthesis; gluconeogenesis. The sequence is that of Fructose-1,6-bisphosphatase class 1 from Oleidesulfovibrio alaskensis (strain ATCC BAA-1058 / DSM 17464 / G20) (Desulfovibrio alaskensis).